A 253-amino-acid chain; its full sequence is Phosphate import ATP-binding protein PstB (253 aa).

Residues 1-249 form the ABC transporter domain; the sequence is MKLMDVRVSG…PRHELTKKFL (249 aa). 38–45 contacts ATP; the sequence is GPSGSGKS.

It belongs to the ABC transporter superfamily. Phosphate importer (TC 3.A.1.7) family. As to quaternary structure, the complex is composed of two ATP-binding proteins (PstB), two transmembrane proteins (PstC and PstA) and a solute-binding protein (PstS).

The protein localises to the cell membrane. It carries out the reaction phosphate(out) + ATP + H2O = ADP + 2 phosphate(in) + H(+). Functionally, part of the ABC transporter complex PstSACB involved in phosphate import. Responsible for energy coupling to the transport system. The sequence is that of Phosphate import ATP-binding protein PstB from Aeropyrum pernix (strain ATCC 700893 / DSM 11879 / JCM 9820 / NBRC 100138 / K1).